Consider the following 171-residue polypeptide: Siroheme decarboxylase NirH subunit (171 aa).

This sequence belongs to the Ahb/Nir family. As to quaternary structure, probably forms a complex composed of NirD, NirL, NirG and NirH. All proteins are required for the total conversion of siroheme to didecarboxysiroheme.

It carries out the reaction siroheme + 2 H(+) = 12,18-didecarboxysiroheme + 2 CO2. Its pathway is porphyrin-containing compound metabolism. Involved in heme d1 biosynthesis. Catalyzes the decarboxylation of siroheme into didecarboxysiroheme. In Pseudomonas aeruginosa (strain ATCC 15692 / DSM 22644 / CIP 104116 / JCM 14847 / LMG 12228 / 1C / PRS 101 / PAO1), this protein is Siroheme decarboxylase NirH subunit.